A 75-amino-acid polypeptide reads, in one-letter code: DNA-directed RNA polymerase subunit epsilon (75 aa).

It belongs to the RNA polymerase subunit epsilon family. RNAP is composed of a core of 2 alpha, a beta and a beta' subunit. The core is associated with a delta subunit, and at least one of epsilon or omega. When a sigma factor is associated with the core the holoenzyme is formed, which can initiate transcription.

It carries out the reaction RNA(n) + a ribonucleoside 5'-triphosphate = RNA(n+1) + diphosphate. Its function is as follows. A non-essential component of RNA polymerase (RNAP). The polypeptide is DNA-directed RNA polymerase subunit epsilon (Lactobacillus gasseri (strain ATCC 33323 / DSM 20243 / BCRC 14619 / CIP 102991 / JCM 1131 / KCTC 3163 / NCIMB 11718 / NCTC 13722 / AM63)).